We begin with the raw amino-acid sequence, 464 residues long: Alpha-1,6-mannosyl-glycoprotein 4-beta-N-acetylglucosaminyltransferase (464 aa).

The Cytoplasmic segment spans residues 1-10 (MRCSPKRSLT). The chain crosses the membrane as a helical; Signal-anchor for type II membrane protein span at residues 11–31 (AVIAASFLLLLLLLLLHRGSW). Topologically, residues 32 to 464 (QDPQEVQFRD…QSIGIWTAGT (433 aa)) are lumenal. Asn70 and Asn201 each carry an N-linked (GlcNAc...) asparagine glycan.

The protein belongs to the glycosyltransferase 54 family. A divalent metal cation is required as a cofactor. In terms of tissue distribution, highly expressed in oviduct, spleen, lung and colon.

Its subcellular location is the golgi apparatus membrane. The catalysed reaction is N(4)-{beta-D-GlcNAc-(1-&gt;2)-[beta-D-GlcNAc-(1-&gt;4)]-alpha-D-Man-(1-&gt;3)-[beta-D-GlcNAc-(1-&gt;2)-[beta-D-GlcNAc-(1-&gt;6)]-alpha-D-Man-(1-&gt;6)]-beta-D-Man-(1-&gt;4)-beta-D-GlcNAc-(1-&gt;4)-beta-D-GlcNAc}-L-asparaginyl-[protein] + UDP-N-acetyl-alpha-D-glucosamine = N(4)-{beta-D-GlcNAc-(1-&gt;2)-[beta-D-GlcNAc-(1-&gt;4)]-alpha-D-Man-(1-&gt;3)-[beta-D-GlcNAc-(1-&gt;2)-[beta-D-GlcNAc-(1-&gt;4)]-[beta-D-GlcNAc-(1-&gt;6)]-alpha-D-Man-(1-&gt;6)]-beta-D-Man-(1-&gt;4)-beta-D-GlcNAc-(1-&gt;4)-beta-D-GlcNAc}-L-asparaginyl-[protein] + UDP + H(+). Its pathway is protein modification; protein glycosylation. Functionally, glycosyltransferase that catalyzes the transfer of GlcNAc to the Manalpha1-6 arm to form GlcNAcBeta1-4Manalpha1-6 linkage (also named 'GnT-VI' activity). May also participate in the transfer of N-acetylglucosamine (GlcNAc) to the core mannose residues of N-linked glycans by catalyzing the formation of the GlcNAcbeta1-4 branch on the GlcNAcbeta1-2Manalpha1-3 arm of the core structure of N-linked glycans. The protein is Alpha-1,6-mannosyl-glycoprotein 4-beta-N-acetylglucosaminyltransferase (MGAT4C) of Gallus gallus (Chicken).